Consider the following 308-residue polypeptide: Acetaldehyde dehydrogenase (308 aa).

Residue 14 to 17 participates in NAD(+) binding; the sequence is TGNI. The Acyl-thioester intermediate role is filled by Cys-129. Residues 160 to 168 and Asn-280 contribute to the NAD(+) site; that span reads SAGPGTRQN.

It belongs to the acetaldehyde dehydrogenase family.

The catalysed reaction is acetaldehyde + NAD(+) + CoA = acetyl-CoA + NADH + H(+). The polypeptide is Acetaldehyde dehydrogenase (Thermomicrobium roseum (strain ATCC 27502 / DSM 5159 / P-2)).